A 380-amino-acid polypeptide reads, in one-letter code: MAPNLRKSHPLLKMINNSLIDLPTPSNISAWWNFGSLLGICLTTQILTGLLLAMHYTADTTLAFSSIAHTCRDVQYGWLIRNMHANGASLLFICIYLHIGRGVYDGSYLHKETWNTGVILLLTLMATAFVGYVLPWGQMSFWGATVITNLFSAIPYIGQTIVEWAWGGFSVDNPTLTRFFALHFLLPFMITGLTLIHLTFLHESGSNNPLGIVANSDKIPFHPYYSTKDILGFTLMLLPLTTLALFSPNLLGDPENFTPANPLVTPPHIKPEWYFLFAYAILRSIPNKLGGVLALAASVLVLFLSPLLHKSKQRTMAFRPLSQLLFWTLVANLLILTWIGSQPVEHPFIIIGQLASTTYFIILLILFPITSALENKMLNF.

4 helical membrane-spanning segments follow: residues 34 to 54, 78 to 99, 114 to 134, and 179 to 199; these read FGSL…LLAM, WLIR…YLHI, WNTG…GYVL, and FFAL…IHLT. The heme b site is built by His84 and His98. Residues His183 and His197 each contribute to the heme b site. His202 is a binding site for a ubiquinone. Transmembrane regions (helical) follow at residues 227 to 247, 289 to 309, 321 to 341, and 348 to 368; these read TKDI…ALFS, LGGV…PLLH, LSQL…WIGS, and FIII…ILFP.

The protein belongs to the cytochrome b family. In terms of assembly, the cytochrome bc1 complex contains 11 subunits: 3 respiratory subunits (MT-CYB, CYC1 and UQCRFS1), 2 core proteins (UQCRC1 and UQCRC2) and 6 low-molecular weight proteins (UQCRH/QCR6, UQCRB/QCR7, UQCRQ/QCR8, UQCR10/QCR9, UQCR11/QCR10 and a cleavage product of UQCRFS1). This cytochrome bc1 complex then forms a dimer. Requires heme b as cofactor.

It is found in the mitochondrion inner membrane. Functionally, component of the ubiquinol-cytochrome c reductase complex (complex III or cytochrome b-c1 complex) that is part of the mitochondrial respiratory chain. The b-c1 complex mediates electron transfer from ubiquinol to cytochrome c. Contributes to the generation of a proton gradient across the mitochondrial membrane that is then used for ATP synthesis. The sequence is that of Cytochrome b (MT-CYB) from Pygoscelis antarcticus (Chinstrap penguin).